The following is a 261-amino-acid chain: Cytochrome c oxidase subunit 3 (261 aa).

Residues 1–15 (MTHQTHAYHMVNPSP) lie on the Mitochondrial matrix side of the membrane. The chain crosses the membrane as a helical span at residues 16–34 (WPLTGALSALLMTSGLIMW). The Mitochondrial intermembrane portion of the chain corresponds to 35–40 (FHFNST). The helical transmembrane segment at 41-66 (TLLMLGLTTNMLTMYQWWRDVIREST) threads the bilayer. Residues 67 to 72 (FQGHHT) lie on the Mitochondrial matrix side of the membrane. Residues 73-105 (PNVQKGLRYGMILFIISEVLFFTGFFWAFYHSS) traverse the membrane as a helical segment. Residues 106 to 128 (LAPTPELGGCWPPTGIHPLNPLE) lie on the Mitochondrial intermembrane side of the membrane. A helical transmembrane segment spans residues 129 to 152 (VPLLNTSVLLASGVSITWAHHSLM). Residues 153–155 (EGN) lie on the Mitochondrial matrix side of the membrane. A helical transmembrane segment spans residues 156–183 (RNHMLQALFITIALGVYFTLLQASEYYE). Topologically, residues 184–190 (APFTISD) are mitochondrial intermembrane. The chain crosses the membrane as a helical span at residues 191–223 (GVYGSTFFVATGFHGLHVIIGSTFLIVCFFRQL). Topologically, residues 224 to 232 (KFHFTSSHH) are mitochondrial matrix. The helical transmembrane segment at 233-256 (FGFEAAAWYWHFVDVVWLFLYVSI) threads the bilayer. The Mitochondrial intermembrane segment spans residues 257–261 (YWWGS).

The protein belongs to the cytochrome c oxidase subunit 3 family. Component of the cytochrome c oxidase (complex IV, CIV), a multisubunit enzyme composed of 14 subunits. The complex is composed of a catalytic core of 3 subunits MT-CO1, MT-CO2 and MT-CO3, encoded in the mitochondrial DNA, and 11 supernumerary subunits COX4I, COX5A, COX5B, COX6A, COX6B, COX6C, COX7A, COX7B, COX7C, COX8 and NDUFA4, which are encoded in the nuclear genome. The complex exists as a monomer or a dimer and forms supercomplexes (SCs) in the inner mitochondrial membrane with NADH-ubiquinone oxidoreductase (complex I, CI) and ubiquinol-cytochrome c oxidoreductase (cytochrome b-c1 complex, complex III, CIII), resulting in different assemblies (supercomplex SCI(1)III(2)IV(1) and megacomplex MCI(2)III(2)IV(2)).

It is found in the mitochondrion inner membrane. The catalysed reaction is 4 Fe(II)-[cytochrome c] + O2 + 8 H(+)(in) = 4 Fe(III)-[cytochrome c] + 2 H2O + 4 H(+)(out). Its function is as follows. Component of the cytochrome c oxidase, the last enzyme in the mitochondrial electron transport chain which drives oxidative phosphorylation. The respiratory chain contains 3 multisubunit complexes succinate dehydrogenase (complex II, CII), ubiquinol-cytochrome c oxidoreductase (cytochrome b-c1 complex, complex III, CIII) and cytochrome c oxidase (complex IV, CIV), that cooperate to transfer electrons derived from NADH and succinate to molecular oxygen, creating an electrochemical gradient over the inner membrane that drives transmembrane transport and the ATP synthase. Cytochrome c oxidase is the component of the respiratory chain that catalyzes the reduction of oxygen to water. Electrons originating from reduced cytochrome c in the intermembrane space (IMS) are transferred via the dinuclear copper A center (CU(A)) of subunit 2 and heme A of subunit 1 to the active site in subunit 1, a binuclear center (BNC) formed by heme A3 and copper B (CU(B)). The BNC reduces molecular oxygen to 2 water molecules using 4 electrons from cytochrome c in the IMS and 4 protons from the mitochondrial matrix. The protein is Cytochrome c oxidase subunit 3 (MT-CO3) of Gazella bennettii (Chinkara).